The primary structure comprises 357 residues: CD4+ T-cell-stimulating antigen (357 aa).

A signal peptide spans 1–22; it reads MKKRTFALALSMIIASGVVLGA. A lipid anchor (N-palmitoyl cysteine) is attached at Cys23. Cys23 carries the S-diacylglycerol cysteine lipid modification.

Belongs to the BMP lipoprotein family.

The protein resides in the cell membrane. This is CD4+ T-cell-stimulating antigen (tcsA) from Listeria innocua serovar 6a (strain ATCC BAA-680 / CLIP 11262).